The sequence spans 85 residues: Putative sodium channel toxin Ts34 (85 aa).

The signal sequence occupies residues Met-1 to Ala-17. Positions Lys-19–Trp-82 constitute an LCN-type CS-alpha/beta domain. 4 cysteine pairs are disulfide-bonded: Cys-30–Cys-81, Cys-34–Cys-57, Cys-43–Cys-62, and Cys-47–Cys-64.

Belongs to the long (4 C-C) scorpion toxin superfamily. Sodium channel inhibitor family. Expressed by the venom gland.

It is found in the secreted. Functionally, putative sodium channel toxin. This chain is Putative sodium channel toxin Ts34, found in Tityus serrulatus (Brazilian scorpion).